Consider the following 417-residue polypeptide: Serine hydroxymethyltransferase (417 aa).

(6S)-5,6,7,8-tetrahydrofolate is bound by residues Leu-120 and 124-126 (GHL). At Lys-229 the chain carries N6-(pyridoxal phosphate)lysine.

Belongs to the SHMT family. As to quaternary structure, homodimer. Pyridoxal 5'-phosphate is required as a cofactor.

Its subcellular location is the cytoplasm. It carries out the reaction (6R)-5,10-methylene-5,6,7,8-tetrahydrofolate + glycine + H2O = (6S)-5,6,7,8-tetrahydrofolate + L-serine. It functions in the pathway one-carbon metabolism; tetrahydrofolate interconversion. The protein operates within amino-acid biosynthesis; glycine biosynthesis; glycine from L-serine: step 1/1. Functionally, catalyzes the reversible interconversion of serine and glycine with tetrahydrofolate (THF) serving as the one-carbon carrier. This reaction serves as the major source of one-carbon groups required for the biosynthesis of purines, thymidylate, methionine, and other important biomolecules. Also exhibits THF-independent aldolase activity toward beta-hydroxyamino acids, producing glycine and aldehydes, via a retro-aldol mechanism. The sequence is that of Serine hydroxymethyltransferase from Anaeromyxobacter sp. (strain Fw109-5).